The primary structure comprises 264 residues: 3-methyl-2-oxobutanoate hydroxymethyltransferase (264 aa).

Residues Asp45 and Asp84 each coordinate Mg(2+). 3-methyl-2-oxobutanoate contacts are provided by residues 45–46 (DS), Asp84, and Lys112. Residue Glu114 coordinates Mg(2+). The Proton acceptor role is filled by Glu181.

This sequence belongs to the PanB family. In terms of assembly, homodecamer; pentamer of dimers. Requires Mg(2+) as cofactor.

It localises to the cytoplasm. It carries out the reaction 3-methyl-2-oxobutanoate + (6R)-5,10-methylene-5,6,7,8-tetrahydrofolate + H2O = 2-dehydropantoate + (6S)-5,6,7,8-tetrahydrofolate. Its pathway is cofactor biosynthesis; (R)-pantothenate biosynthesis; (R)-pantoate from 3-methyl-2-oxobutanoate: step 1/2. In terms of biological role, catalyzes the reversible reaction in which hydroxymethyl group from 5,10-methylenetetrahydrofolate is transferred onto alpha-ketoisovalerate to form ketopantoate. The polypeptide is 3-methyl-2-oxobutanoate hydroxymethyltransferase (Colwellia psychrerythraea (strain 34H / ATCC BAA-681) (Vibrio psychroerythus)).